A 259-amino-acid chain; its full sequence is 4-hydroxy-tetrahydrodipicolinate reductase (259 aa).

9-14 provides a ligand contact to NAD(+); the sequence is GANGRM. Arginine 37 contributes to the NADP(+) binding site. NAD(+) contacts are provided by residues 92-94 and 116-119; these read GTT and ASNM. The active-site Proton donor/acceptor is histidine 149. Histidine 150 is a binding site for (S)-2,3,4,5-tetrahydrodipicolinate. Residue lysine 153 is the Proton donor of the active site. Position 159–160 (159–160) interacts with (S)-2,3,4,5-tetrahydrodipicolinate; sequence GT.

This sequence belongs to the DapB family.

Its subcellular location is the cytoplasm. The enzyme catalyses (S)-2,3,4,5-tetrahydrodipicolinate + NAD(+) + H2O = (2S,4S)-4-hydroxy-2,3,4,5-tetrahydrodipicolinate + NADH + H(+). It catalyses the reaction (S)-2,3,4,5-tetrahydrodipicolinate + NADP(+) + H2O = (2S,4S)-4-hydroxy-2,3,4,5-tetrahydrodipicolinate + NADPH + H(+). The protein operates within amino-acid biosynthesis; L-lysine biosynthesis via DAP pathway; (S)-tetrahydrodipicolinate from L-aspartate: step 4/4. Catalyzes the conversion of 4-hydroxy-tetrahydrodipicolinate (HTPA) to tetrahydrodipicolinate. In Desulfovibrio desulfuricans (strain ATCC 27774 / DSM 6949 / MB), this protein is 4-hydroxy-tetrahydrodipicolinate reductase.